Here is a 128-residue protein sequence, read N- to C-terminus: Large ribosomal subunit protein uL24 (128 aa).

This sequence belongs to the universal ribosomal protein uL24 family. As to quaternary structure, part of the 50S ribosomal subunit.

Functionally, one of two assembly initiator proteins, it binds directly to the 5'-end of the 23S rRNA, where it nucleates assembly of the 50S subunit. In terms of biological role, located at the polypeptide exit tunnel on the outside of the subunit. The sequence is that of Large ribosomal subunit protein uL24 from Pyrobaculum calidifontis (strain DSM 21063 / JCM 11548 / VA1).